The sequence spans 183 residues: uncharacterized protein (183 aa).

A helical transmembrane segment spans residues 153–175; sequence LLYVFIRLFAGCLKVFRLCILWL.

Its subcellular location is the membrane. This is an uncharacterized protein from Saccharomyces cerevisiae (strain ATCC 204508 / S288c) (Baker's yeast).